A 474-amino-acid chain; its full sequence is ATP synthase subunit beta (474 aa).

152–159 (GGAGVGKT) is a binding site for ATP.

The protein belongs to the ATPase alpha/beta chains family. F-type ATPases have 2 components, CF(1) - the catalytic core - and CF(0) - the membrane proton channel. CF(1) has five subunits: alpha(3), beta(3), gamma(1), delta(1), epsilon(1). CF(0) has four main subunits: a(1), b(1), b'(1) and c(9-12).

It is found in the cell inner membrane. The catalysed reaction is ATP + H2O + 4 H(+)(in) = ADP + phosphate + 5 H(+)(out). In terms of biological role, produces ATP from ADP in the presence of a proton gradient across the membrane. The catalytic sites are hosted primarily by the beta subunits. The chain is ATP synthase subunit beta from Rhodospirillum rubrum (strain ATCC 11170 / ATH 1.1.1 / DSM 467 / LMG 4362 / NCIMB 8255 / S1).